Reading from the N-terminus, the 532-residue chain is Flavin-containing monooxygenase 1 (532 aa).

The Lumenal portion of the chain corresponds to 1–510 (MVKRVAIVGA…TRTIQESPSS (510 aa)). Residues 9–13 (GAGVS), Glu-32, 40–41 (LW), and 61–62 (NS) contribute to the FAD site. Residues 60 to 61 (SN) and 195 to 198 (SGTD) contribute to the NADP(+) site. The chain crosses the membrane as a helical span at residues 511-531 (FETLLKLFSFLALLIAVFLIF). A topological domain (cytoplasmic) is located at residue Leu-532.

Belongs to the FMO family. The cofactor is FAD. Liver.

The protein localises to the endoplasmic reticulum membrane. The enzyme catalyses hypotaurine + NADPH + O2 + H(+) = taurine + NADP(+) + H2O. It carries out the reaction hypotaurine + NADH + O2 + H(+) = taurine + NAD(+) + H2O. It catalyses the reaction trimethylamine + NADPH + O2 = trimethylamine N-oxide + NADP(+) + H2O. The catalysed reaction is N,N-dimethylaniline + NADPH + O2 + H(+) = N,N-dimethylaniline N-oxide + NADP(+) + H2O. Broad spectrum monooxygenase that catalyzes the oxygenation of a wide variety of nitrogen- and sulfur-containing compounds including xenobiotics. Catalyzes the S-oxygenation of hypotaurine to produce taurine, an organic osmolyte involved in cell volume regulation as well as a variety of cytoprotective and developmental processes. In vitro, catalyzes the N-oxygenation of trimethylamine (TMA) to produce trimethylamine N-oxide (TMAO) and could therefore participate to the detoxification of this compound that is generated by the action of gut microbiota from dietary precursors such as choline, choline containing compounds, betaine or L-carnitine. This is Flavin-containing monooxygenase 1 from Mus musculus (Mouse).